The sequence spans 409 residues: Glutamyl-tRNA(Gln) amidotransferase subunit D (409 aa).

In terms of domain architecture, Asparaginase/glutaminase spans 68–390; sequence RKISVLATGG…DLFRDLFRKN (323 aa). Active-site residues include Thr-78, Thr-152, Asp-153, and Lys-230.

It belongs to the asparaginase 1 family. GatD subfamily. As to quaternary structure, heterodimer of GatD and GatE.

The enzyme catalyses L-glutamyl-tRNA(Gln) + L-glutamine + ATP + H2O = L-glutaminyl-tRNA(Gln) + L-glutamate + ADP + phosphate + H(+). Functionally, allows the formation of correctly charged Gln-tRNA(Gln) through the transamidation of misacylated Glu-tRNA(Gln) in organisms which lack glutaminyl-tRNA synthetase. The reaction takes place in the presence of glutamine and ATP through an activated gamma-phospho-Glu-tRNA(Gln). The GatDE system is specific for glutamate and does not act on aspartate. In Thermoplasma acidophilum (strain ATCC 25905 / DSM 1728 / JCM 9062 / NBRC 15155 / AMRC-C165), this protein is Glutamyl-tRNA(Gln) amidotransferase subunit D.